A 458-amino-acid chain; its full sequence is Fasciclin-like arabinogalactan protein 17 (458 aa).

A signal peptide spans 1–30; it reads MDRRIYGGSAVIHLFLFFSVLIFSAASALS. The FAS1 1 domain occupies 43–184; sequence NSNSVLVALL…GLIHGIERLL (142 aa). N-linked (GlcNAc...) asparagine glycosylation occurs at Asn80. A disordered region spans residues 207-262; the sequence is PEGAPEVDPRTNRLKKPAAPVPAGSPPALPIQSAMAPGPSLAPAPAPGPGGKQHHF. The span at 225–235 shows a compositional bias: pro residues; it reads APVPAGSPPAL. In terms of domain architecture, FAS1 2 spans 268–411; that stretch reads VKDFIHTLLH…ISVQGIDGVL (144 aa). Asn290 carries an N-linked (GlcNAc...) asparagine glycan.

It belongs to the fasciclin-like AGP family.

It localises to the secreted. Its function is as follows. May be a cell surface adhesion protein. The chain is Fasciclin-like arabinogalactan protein 17 (FLA17) from Arabidopsis thaliana (Mouse-ear cress).